A 175-amino-acid chain; its full sequence is NADH dehydrogenase [ubiquinone] iron-sulfur protein 4, mitochondrial (175 aa).

Residues Met-1–Leu-42 constitute a mitochondrion transit peptide. The tract at residues Glu-149–Lys-175 is disordered.

The protein belongs to the complex I NDUFS4 subunit family. Mammalian complex I is composed of 45 different subunits. This is a component of the iron-sulfur (IP) fragment of the enzyme. Interacts with BCAP31 and TOMM40; the interaction mediates its translocation to the mitochondria; the interaction with BCAP31 is direct.

Its subcellular location is the mitochondrion inner membrane. Functionally, accessory subunit of the mitochondrial membrane respiratory chain NADH dehydrogenase (Complex I), that is believed not to be involved in catalysis. Complex I functions in the transfer of electrons from NADH to the respiratory chain. The immediate electron acceptor for the enzyme is believed to be ubiquinone. This chain is NADH dehydrogenase [ubiquinone] iron-sulfur protein 4, mitochondrial (NDUFS4), found in Pan troglodytes (Chimpanzee).